A 354-amino-acid chain; its full sequence is Uroporphyrinogen decarboxylase (354 aa).

Substrate contacts are provided by residues R27–R31, D77, Y154, T209, and H327.

It belongs to the uroporphyrinogen decarboxylase family. In terms of assembly, homodimer.

It is found in the cytoplasm. It carries out the reaction uroporphyrinogen III + 4 H(+) = coproporphyrinogen III + 4 CO2. Its pathway is porphyrin-containing compound metabolism; protoporphyrin-IX biosynthesis; coproporphyrinogen-III from 5-aminolevulinate: step 4/4. Catalyzes the decarboxylation of four acetate groups of uroporphyrinogen-III to yield coproporphyrinogen-III. In Pseudomonas entomophila (strain L48), this protein is Uroporphyrinogen decarboxylase.